Reading from the N-terminus, the 467-residue chain is 3-isopropylmalate dehydratase large subunit (467 aa).

Positions 347, 408, and 411 each coordinate [4Fe-4S] cluster.

It belongs to the aconitase/IPM isomerase family. LeuC type 1 subfamily. Heterodimer of LeuC and LeuD. The cofactor is [4Fe-4S] cluster.

The catalysed reaction is (2R,3S)-3-isopropylmalate = (2S)-2-isopropylmalate. Its pathway is amino-acid biosynthesis; L-leucine biosynthesis; L-leucine from 3-methyl-2-oxobutanoate: step 2/4. Catalyzes the isomerization between 2-isopropylmalate and 3-isopropylmalate, via the formation of 2-isopropylmaleate. This is 3-isopropylmalate dehydratase large subunit from Bordetella bronchiseptica (strain ATCC BAA-588 / NCTC 13252 / RB50) (Alcaligenes bronchisepticus).